The sequence spans 115 residues: T cell receptor beta variable 16 (115 aa).

Residues 1–20 form the signal peptide; the sequence is MSPIFTCITILCLLAAGSPG. In terms of domain architecture, Ig-like spans 21–115; the sequence is EEVAQTPKHL…SAVYFCASSQ (95 aa). A disulfide bridge connects residues Cys42 and Cys111.

Alpha-beta TR is a heterodimer composed of an alpha and beta chain; disulfide-linked. The alpha-beta TR is associated with the transmembrane signaling CD3 coreceptor proteins to form the TR-CD3 (TcR or TCR). The assembly of alpha-beta TR heterodimers with CD3 occurs in the endoplasmic reticulum where a single alpha-beta TR heterodimer associates with one CD3D-CD3E heterodimer, one CD3G-CD3E heterodimer and one CD247 homodimer forming a stable octameric structure. CD3D-CD3E and CD3G-CD3E heterodimers preferentially associate with TR alpha and TR beta chains, respectively. The association of the CD247 homodimer is the last step of TcR assembly in the endoplasmic reticulum and is required for transport to the cell surface.

Its subcellular location is the cell membrane. In terms of biological role, v region of the variable domain of T cell receptor (TR) beta chain that participates in the antigen recognition. Alpha-beta T cell receptors are antigen specific receptors which are essential to the immune response and are present on the cell surface of T lymphocytes. Recognize peptide-major histocompatibility (MH) (pMH) complexes that are displayed by antigen presenting cells (APC), a prerequisite for efficient T cell adaptive immunity against pathogens. Binding of alpha-beta TR to pMH complex initiates TR-CD3 clustering on the cell surface and intracellular activation of LCK that phosphorylates the ITAM motifs of CD3G, CD3D, CD3E and CD247 enabling the recruitment of ZAP70. In turn ZAP70 phosphorylates LAT, which recruits numerous signaling molecules to form the LAT signalosome. The LAT signalosome propagates signal branching to three major signaling pathways, the calcium, the mitogen-activated protein kinase (MAPK) kinase and the nuclear factor NF-kappa-B (NF-kB) pathways, leading to the mobilization of transcription factors that are critical for gene expression and essential for T cell growth and differentiation. The T cell repertoire is generated in the thymus, by V-(D)-J rearrangement. This repertoire is then shaped by intrathymic selection events to generate a peripheral T cell pool of self-MH restricted, non-autoaggressive T cells. Post-thymic interaction of alpha-beta TR with the pMH complexes shapes TR structural and functional avidity. This is T cell receptor beta variable 16 from Homo sapiens (Human).